The chain runs to 261 residues: MTHQTHAYHMVNPSPWPLTGALSALLMTSGLAMWFHFNSVTLLTLGLTTNMLTMYQWWRDIIRESTFQGHHTPTVQKGLRYGMILFIISEVLFFTGFFWAFYHSSLAPTPELGGCWPPTGISPLNPLEVPLLNTSVLLASGVSITWAHHSLMEGNRNHMLQALFITIALGVYFTLLQASEYYEAPFTISDGIYGSTFFVATGFHGLHVIIGSTFLIVCFFRQLKFHFTSNHHFGFEAAAWYWHFVDVVWLFLYVSIYWWGS.

Topologically, residues 1–15 (MTHQTHAYHMVNPSP) are mitochondrial matrix. Residues 16–34 (WPLTGALSALLMTSGLAMW) traverse the membrane as a helical segment. The Mitochondrial intermembrane segment spans residues 35 to 40 (FHFNSV). The helical transmembrane segment at 41–66 (TLLTLGLTTNMLTMYQWWRDIIREST) threads the bilayer. At 67–72 (FQGHHT) the chain is on the mitochondrial matrix side. The chain crosses the membrane as a helical span at residues 73–105 (PTVQKGLRYGMILFIISEVLFFTGFFWAFYHSS). At 106–128 (LAPTPELGGCWPPTGISPLNPLE) the chain is on the mitochondrial intermembrane side. Residues 129–152 (VPLLNTSVLLASGVSITWAHHSLM) traverse the membrane as a helical segment. Over 153–155 (EGN) the chain is Mitochondrial matrix. Residues 156-183 (RNHMLQALFITIALGVYFTLLQASEYYE) traverse the membrane as a helical segment. Residues 184–190 (APFTISD) are Mitochondrial intermembrane-facing. The helical transmembrane segment at 191-223 (GIYGSTFFVATGFHGLHVIIGSTFLIVCFFRQL) threads the bilayer. The Mitochondrial matrix segment spans residues 224 to 232 (KFHFTSNHH). A helical membrane pass occupies residues 233-256 (FGFEAAAWYWHFVDVVWLFLYVSI). Topologically, residues 257–261 (YWWGS) are mitochondrial intermembrane.

Belongs to the cytochrome c oxidase subunit 3 family. In terms of assembly, component of the cytochrome c oxidase (complex IV, CIV), a multisubunit enzyme composed of 14 subunits. The complex is composed of a catalytic core of 3 subunits MT-CO1, MT-CO2 and MT-CO3, encoded in the mitochondrial DNA, and 11 supernumerary subunits COX4I, COX5A, COX5B, COX6A, COX6B, COX6C, COX7A, COX7B, COX7C, COX8 and NDUFA4, which are encoded in the nuclear genome. The complex exists as a monomer or a dimer and forms supercomplexes (SCs) in the inner mitochondrial membrane with NADH-ubiquinone oxidoreductase (complex I, CI) and ubiquinol-cytochrome c oxidoreductase (cytochrome b-c1 complex, complex III, CIII), resulting in different assemblies (supercomplex SCI(1)III(2)IV(1) and megacomplex MCI(2)III(2)IV(2)).

It localises to the mitochondrion inner membrane. It carries out the reaction 4 Fe(II)-[cytochrome c] + O2 + 8 H(+)(in) = 4 Fe(III)-[cytochrome c] + 2 H2O + 4 H(+)(out). Functionally, component of the cytochrome c oxidase, the last enzyme in the mitochondrial electron transport chain which drives oxidative phosphorylation. The respiratory chain contains 3 multisubunit complexes succinate dehydrogenase (complex II, CII), ubiquinol-cytochrome c oxidoreductase (cytochrome b-c1 complex, complex III, CIII) and cytochrome c oxidase (complex IV, CIV), that cooperate to transfer electrons derived from NADH and succinate to molecular oxygen, creating an electrochemical gradient over the inner membrane that drives transmembrane transport and the ATP synthase. Cytochrome c oxidase is the component of the respiratory chain that catalyzes the reduction of oxygen to water. Electrons originating from reduced cytochrome c in the intermembrane space (IMS) are transferred via the dinuclear copper A center (CU(A)) of subunit 2 and heme A of subunit 1 to the active site in subunit 1, a binuclear center (BNC) formed by heme A3 and copper B (CU(B)). The BNC reduces molecular oxygen to 2 water molecules using 4 electrons from cytochrome c in the IMS and 4 protons from the mitochondrial matrix. The polypeptide is Cytochrome c oxidase subunit 3 (MT-CO3) (Neotragus moschatus (Suni)).